The primary structure comprises 316 residues: Ribonuclease Z (316 aa).

The Zn(2+) site is built by H63, H65, D67, H68, H143, D213, and H271. D67 acts as the Proton acceptor in catalysis.

This sequence belongs to the RNase Z family. In terms of assembly, homodimer. It depends on Zn(2+) as a cofactor.

It carries out the reaction Endonucleolytic cleavage of RNA, removing extra 3' nucleotides from tRNA precursor, generating 3' termini of tRNAs. A 3'-hydroxy group is left at the tRNA terminus and a 5'-phosphoryl group is left at the trailer molecule.. Functionally, zinc phosphodiesterase, which displays some tRNA 3'-processing endonuclease activity. Probably involved in tRNA maturation, by removing a 3'-trailer from precursor tRNA. The polypeptide is Ribonuclease Z (Bacteroides thetaiotaomicron (strain ATCC 29148 / DSM 2079 / JCM 5827 / CCUG 10774 / NCTC 10582 / VPI-5482 / E50)).